The primary structure comprises 441 residues: MALALMCGRRQLLCLLRPQRQFHSVAGPCQWPRKPLTAGLGFPADRCLGHPRYVLLMAPGPRGLSTSAVSFGEAQVPAPPVIPATPPPTAVPEVASGEAADVIQAAAEQSFAELGLGSYTPVGLIQNLLEFMHVNLGLPWWGAIAACTVLARCLVFPLIVKGQREAAKIHNHLPEIQKFSARIREAKLTGNHTEFYRASSEMTFYQKKHDIKLFRPLILPLTQAPIFISFFIALREMANLPVPSLQTGGLWWFQDLTLSDPIYVLPLVVTATMWGVLELGAETGMQSSDLQWMRNFIRLMPLAVLPITIHFPTAVFMYWLSSNMFSLGQVACLRIPAVRTVLKIPQRVVHDPDKLAPREGFLKSFKQGWKNAEMAHQLQERERRMQNHLELAARGPLRQTFAHNPLLQHGKNDPPNTPNSSSSSSSSNKAKSKQPWRDTLG.

At 1 to 113 (MALALMCGRR…QAAAEQSFAE (113 aa)) the chain is on the mitochondrial intermembrane side. A helical membrane pass occupies residues 114–134 (LGLGSYTPVGLIQNLLEFMHV). Residues 135–139 (NLGLP) are Mitochondrial matrix-facing. A helical transmembrane segment spans residues 140–160 (WWGAIAACTVLARCLVFPLIV). The Mitochondrial intermembrane segment spans residues 161-212 (KGQREAAKIHNHLPEIQKFSARIREAKLTGNHTEFYRASSEMTFYQKKHDIK). Residues 213–233 (LFRPLILPLTQAPIFISFFIA) traverse the membrane as a helical segment. The Mitochondrial matrix segment spans residues 234 to 260 (LREMANLPVPSLQTGGLWWFQDLTLSD). The helical transmembrane segment at 261–281 (PIYVLPLVVTATMWGVLELGA) threads the bilayer. Over 282–298 (ETGMQSSDLQWMRNFIR) the chain is Mitochondrial intermembrane. Residues 299-319 (LMPLAVLPITIHFPTAVFMYW) form a helical membrane-spanning segment. The Mitochondrial matrix portion of the chain corresponds to 320–441 (LSSNMFSLGQ…SKQPWRDTLG (122 aa)). Serine 364 is modified (phosphoserine). A Phosphothreonine modification is found at threonine 400. The interval 405–441 (PLLQHGKNDPPNTPNSSSSSSSSNKAKSKQPWRDTLG) is disordered. The span at 418–429 (PNSSSSSSSSNK) shows a compositional bias: low complexity.

The protein belongs to the OXA1/ALB3/YidC family. In terms of assembly, monomer; predominantly monomeric at low salt concentrations. Homooligomer; predominantly homooligomeric at high salt concentrations. Associates with the mitochondrial ribosome. Associates preferentially as a dimer with the large ribosomal subunit 39S of the mitochondrial ribosome. Interacts with OXA1L; promoting cotranslational quality control in mitochondria.

The protein localises to the mitochondrion inner membrane. In terms of biological role, mitochondrial membrane insertase that mediates the cotranslational insertion of integral membrane proteins into the mitochondrial inner membrane. Essential for the activity and assembly of cytochrome oxidase. Required for the correct biogenesis of ATP synthase and complex I in mitochondria. This Bos taurus (Bovine) protein is Mitochondrial inner membrane protein OXA1L (OXA1L).